Consider the following 487-residue polypeptide: Cytochrome c-552 (487 aa).

An N-terminal signal peptide occupies residues 1-27 (MSKKWTRNTAAMAAILSALCLSTNALA). His104 serves as a coordination point for heme c. Heme contacts are provided by Cys132, Cys135, and Lys136. Residues Cys170, Cys173, His174, Cys219, Cys222, and His223 each coordinate heme c. Residues Glu225, Tyr226, Lys271, and Gln273 each coordinate Ca(2+). Substrate is bound at residue Tyr226. Residue His274 coordinates substrate. Heme c is bound by residues His285, Cys292, Cys295, His296, His311, Cys324, Cys327, His328, and His403.

This sequence belongs to the cytochrome c-552 family. Requires Ca(2+) as cofactor. The cofactor is heme c.

It is found in the periplasm. It carries out the reaction 6 Fe(III)-[cytochrome c] + NH4(+) + 2 H2O = 6 Fe(II)-[cytochrome c] + nitrite + 8 H(+). It functions in the pathway nitrogen metabolism; nitrate reduction (assimilation). In terms of biological role, catalyzes the reduction of nitrite to ammonia, consuming six electrons in the process. This chain is Cytochrome c-552, found in Photobacterium profundum (strain SS9).